A 378-amino-acid chain; its full sequence is Chlorophyll synthase, chloroplastic (378 aa).

The N-terminal 45 residues, 1 to 45, are a transit peptide targeting the chloroplast; sequence MATSHPLAAAAATSSSSATFRPPLRFLSSPPSSLTLNRRRSFPVV. A run of 7 helical transmembrane segments spans residues 173–193, 199–219, 232–252, 257–277, 302–322, 327–347, and 357–377; these read VITQ…LLDI, FPII…YSAP, FALG…LFGT, IVVL…VNDF, WICV…LLST, YALA…QYFL, and YQAS…LATS.

It belongs to the UbiA prenyltransferase family. Chlorophyll synthase subfamily. Requires Mg(2+) as cofactor. It depends on Zn(2+) as a cofactor. The cofactor is Mn(2+).

The protein resides in the plastid. Its subcellular location is the chloroplast membrane. It catalyses the reaction phytyl diphosphate + chlorophyllide a + H(+) = chlorophyll a + diphosphate. Its activity is regulated as follows. Inhibited by N-phenylmaleimide (NPM) and diacetyl. Functionally, involved in one of the last steps of the biosynthesis of chlorophyll a. Catalyzes the esterification of chlorophillide a with either geranylgeranyldiphosphate (GGPP) or phytyldiphosphate (PhyPP). May also use with a lower efficiency the monophosphates GGMP and PhyMP, but not the non-phosphorylated alcohols geranylgeraniol and phytol. The tetraprenyl diphosphate must bind to the enzyme as the first substrate and esterification occurs when this pre-loaded enzyme meets the second substrate, chlorophyllide. This chain is Chlorophyll synthase, chloroplastic (CHLG), found in Avena sativa (Oat).